The chain runs to 93 residues: Cobalt transport protein CbiN (93 aa).

2 consecutive transmembrane segments (helical) span residues 5 to 25 (LMLL…NHGG) and 63 to 83 (LLFT…LGYC).

The protein belongs to the CbiN family. Forms an energy-coupling factor (ECF) transporter complex composed of an ATP-binding protein (A component, CbiO), a transmembrane protein (T component, CbiQ) and 2 possible substrate-capture proteins (S components, CbiM and CbiN) of unknown stoichimetry.

It is found in the cell inner membrane. Its pathway is cofactor biosynthesis; adenosylcobalamin biosynthesis. Part of the energy-coupling factor (ECF) transporter complex CbiMNOQ involved in cobalt import. The chain is Cobalt transport protein CbiN from Salmonella gallinarum (strain 287/91 / NCTC 13346).